The following is a 578-amino-acid chain: Zinc finger-containing ubiquitin peptidase 1 (578 aa).

Residues 2–24 form a C2H2-type 1 zinc finger; the sequence is LSCNICGETVTSEPDMKAHLIVH. The C2H2-type 2; atypical zinc-finger motif lies at 29–52; sequence IICPFCKLSGVNYDEMCFHIETAH. 2 C2H2-type zinc fingers span residues 154-177 and 193-215; these read PECPFCGKIEEHSEDMETHVKTKH and YDCPMCGLICTNYHILQEHVDLH. The tract at residues 226-248 is MIU; sequence DRVQCSGDLQLAHQLQQEEDRKR. The zUBD/ZHA stretch occupies residues 249-274; the sequence is RSEESRQEIEEFQKLQRQYGLDNSGG. N6-acetyllysine is present on K262. C360 functions as the Nucleophile in the catalytic mechanism. H491 serves as the catalytic Proton acceptor. D512 is an active-site residue.

The protein belongs to the peptidase C78 family. ZUFSP subfamily. Interacts with RPA1 and RPA2.

The protein localises to the cytoplasm. Its subcellular location is the nucleus. It carries out the reaction Thiol-dependent hydrolysis of ester, thioester, amide, peptide and isopeptide bonds formed by the C-terminal Gly of ubiquitin (a 76-residue protein attached to proteins as an intracellular targeting signal).. In terms of biological role, deubiquitinase with endodeubiquitinase activity that specifically interacts with and cleaves 'Lys-63'-linked long polyubiquitin chains. Shows only weak activity against 'Lys-11' and 'Lys-48'-linked chains. Plays an important role in genome stability pathways, functioning to prevent spontaneous DNA damage and also promote cellular survival in response to exogenous DNA damage. Modulates the ubiquitination status of replication protein A (RPA) complex proteins in response to replication stress. The chain is Zinc finger-containing ubiquitin peptidase 1 from Homo sapiens (Human).